The following is a 378-amino-acid chain: CST complex subunit STN1 (378 aa).

Residues 8–195 (MECESSPREE…KVYDQPFRNP (188 aa)) are interaction with CTC1. The OB DNA-binding region spans 64–165 (VDIMGAVISV…EICANIYYKV (102 aa)). 2 winged helix-turn-helix (wHTH) regions span residues 201-305 (EALN…YVTT) and 306-378 (KDKD…YAAF).

This sequence belongs to the STN1 family. As to quaternary structure, component of the CST complex, composed of TEN1/C17orf106, CTC1/C17orf68 and STN1; in the complex interacts directly with TEN1 and CTC1. Interacts with ACD/TPP1. Interacts with POT1 and POLA1.

The protein localises to the nucleus. It is found in the chromosome. It localises to the telomere. In terms of biological role, component of the CST complex proposed to act as a specialized replication factor promoting DNA replication under conditions of replication stress or natural replication barriers such as the telomere duplex. The CST complex binds single-stranded DNA with high affinity in a sequence-independent manner, while isolated subunits bind DNA with low affinity by themselves. Initially the CST complex has been proposed to protect telomeres from DNA degradation. However, the CST complex has been shown to be involved in several aspects of telomere replication. The CST complex inhibits telomerase and is involved in telomere length homeostasis; it is proposed to bind to newly telomerase-synthesized 3' overhangs and to terminate telomerase action implicating the association with the ACD:POT1 complex thus interfering with its telomerase stimulation activity. The CST complex is also proposed to be involved in fill-in synthesis of the telomeric C-strand probably implicating recruitment and activation of DNA polymerase alpha. The CST complex facilitates recovery from many forms of exogenous DNA damage; seems to be involved in the re-initiation of DNA replication at repaired forks and/or dormant origins. Required for efficicient replication of the duplex region of the telomere. Promotes efficient replication of lagging-strand telomeres. Promotes general replication start following replication-fork stalling implicating new origin firing. May be in involved in C-strand fill-in during late S/G2 phase independent of its role in telomere duplex replication. The chain is CST complex subunit STN1 from Mus musculus (Mouse).